Here is a 397-residue protein sequence, read N- to C-terminus: Acetate kinase (397 aa).

Asn9 is a Mg(2+) binding site. Lys16 contributes to the ATP binding site. Arg87 contacts substrate. The Proton donor/acceptor role is filled by Asp144. ATP contacts are provided by residues 204–208 (HLGNG), 279–281 (DCR), and 327–331 (GIGEN). Residue Glu381 participates in Mg(2+) binding.

It belongs to the acetokinase family. Homodimer. The cofactor is Mg(2+). Mn(2+) is required as a cofactor.

The protein localises to the cytoplasm. It carries out the reaction acetate + ATP = acetyl phosphate + ADP. Its pathway is metabolic intermediate biosynthesis; acetyl-CoA biosynthesis; acetyl-CoA from acetate: step 1/2. In terms of biological role, catalyzes the formation of acetyl phosphate from acetate and ATP. Can also catalyze the reverse reaction. This Chromobacterium violaceum (strain ATCC 12472 / DSM 30191 / JCM 1249 / CCUG 213 / NBRC 12614 / NCIMB 9131 / NCTC 9757 / MK) protein is Acetate kinase.